The sequence spans 116 residues: Ribonuclease P protein component (116 aa).

It belongs to the RnpA family. Consists of a catalytic RNA component (M1 or rnpB) and a protein subunit.

The catalysed reaction is Endonucleolytic cleavage of RNA, removing 5'-extranucleotides from tRNA precursor.. Its function is as follows. RNaseP catalyzes the removal of the 5'-leader sequence from pre-tRNA to produce the mature 5'-terminus. It can also cleave other RNA substrates such as 4.5S RNA. The protein component plays an auxiliary but essential role in vivo by binding to the 5'-leader sequence and broadening the substrate specificity of the ribozyme. In Mycobacterium bovis (strain ATCC BAA-935 / AF2122/97), this protein is Ribonuclease P protein component.